The primary structure comprises 585 residues: A-type ATP synthase subunit A (585 aa).

235-242 (GPFGSGKT) contributes to the ATP binding site.

This sequence belongs to the ATPase alpha/beta chains family. Has multiple subunits with at least A(3), B(3), C, D, E, F, H, I and proteolipid K(x).

The protein resides in the cell membrane. It catalyses the reaction ATP + H2O + 4 H(+)(in) = ADP + phosphate + 5 H(+)(out). Functionally, component of the A-type ATP synthase that produces ATP from ADP in the presence of a proton gradient across the membrane. The A chain is the catalytic subunit. This chain is A-type ATP synthase subunit A, found in Halobacterium salinarum (strain ATCC 29341 / DSM 671 / R1).